Reading from the N-terminus, the 324-residue chain is MSFLQALSIFLLLLLYVVVGSAEQCGRQAGGALCPGGLCCSQFGWCGSTADYCTVPGCQSQCSGSGPAPGPGGLTNLISRETFNQMLLHRNDGACPARGFYTYDAFIAAARSFPAFATTGDQATRKREIAAFLAQTSHETTGGAGWAAPDGPYAWGYCYNRELNPPSSYCASDPNYPCAPGKQYFGRGPMQLSWNYNYGQCGRAIGVDLLNNPDLLSSDPTISFKSAFWFWMTPQSPKPSCHNVIIGAWSPSSSDRAAGRVPGYGVITNIINGGLECGKGWNAQVEDRIGFYKRYCDILGVSYGNNLDCYNQSPFGNGVSVDSM.

The first 22 residues, 1-22 (MSFLQALSIFLLLLLYVVVGSA), serve as a signal peptide directing secretion. The Chitin-binding type-1 domain maps to 23–64 (EQCGRQAGGALCPGGLCCSQFGWCGSTADYCTVPGCQSQCSG). Disulfide bonds link C25/C40, C34/C46, C39/C53, C58/C62, C95/C158, C170/C178, and C277/C309. The active-site Proton donor is the E139. The propeptide at 318-324 (GVSVDSM) is removed in mature form.

This sequence belongs to the glycosyl hydrolase 19 family. Chitinase class I subfamily.

It catalyses the reaction Random endo-hydrolysis of N-acetyl-beta-D-glucosaminide (1-&gt;4)-beta-linkages in chitin and chitodextrins.. Its function is as follows. Defense against chitin-containing fungal pathogens. This is Endochitinase 1 from Gossypium hirsutum (Upland cotton).